Consider the following 195-residue polypeptide: Probable nicotinate-nucleotide adenylyltransferase (195 aa).

This sequence belongs to the NadD family.

It catalyses the reaction nicotinate beta-D-ribonucleotide + ATP + H(+) = deamido-NAD(+) + diphosphate. It functions in the pathway cofactor biosynthesis; NAD(+) biosynthesis; deamido-NAD(+) from nicotinate D-ribonucleotide: step 1/1. Its function is as follows. Catalyzes the reversible adenylation of nicotinate mononucleotide (NaMN) to nicotinic acid adenine dinucleotide (NaAD). This chain is Probable nicotinate-nucleotide adenylyltransferase, found in Opitutus terrae (strain DSM 11246 / JCM 15787 / PB90-1).